A 219-amino-acid polypeptide reads, in one-letter code: Putative ankyrin repeat protein BB_0399 (219 aa).

ANK repeat units follow at residues 104–133 (YKIS…SLNQ), 137–166 (TGYS…DLSF), and 170–199 (NRKT…YIDD).

The sequence is that of Putative ankyrin repeat protein BB_0399 from Borreliella burgdorferi (strain ATCC 35210 / DSM 4680 / CIP 102532 / B31) (Borrelia burgdorferi).